The following is a 98-amino-acid chain: Integration host factor subunit alpha (98 aa).

The disordered stretch occupies residues 51-71 (NFDLRDKNERPGRNPKTGEDI). Positions 53–69 (DLRDKNERPGRNPKTGE) are enriched in basic and acidic residues.

Belongs to the bacterial histone-like protein family. Heterodimer of an alpha and a beta chain.

In terms of biological role, this protein is one of the two subunits of integration host factor, a specific DNA-binding protein that functions in genetic recombination as well as in transcriptional and translational control. The polypeptide is Integration host factor subunit alpha (Vibrio campbellii (strain ATCC BAA-1116)).